We begin with the raw amino-acid sequence, 55 residues long: Transcriptional regulator CdrS (55 aa).

This sequence belongs to the CdrS family.

The protein resides in the cytoplasm. Transcriptional regulator which plays a central role in the regulation of cell division. Activates the expression of the gene encoding the cell division protein FtsZ2, and of other genes encoding proteins predicted to function in critical aspects of cell division. Required for normal cell division but not for cell elongation. May act during the transition from stasis to growth. The CdrSL-FtsZ2 transcriptional network might coordinate cell division timing with cell growth. This chain is Transcriptional regulator CdrS, found in Halobacterium salinarum (strain ATCC 700922 / JCM 11081 / NRC-1) (Halobacterium halobium).